A 686-amino-acid chain; its full sequence is Probable ferric reductase transmembrane component (686 aa).

The next 7 helical transmembrane spans lie at 23–43 (LSGWASLALALGLVCVVVPVV), 79–99 (TLWLALLWCMLGGACAVVGSA), 111–131 (VAAAFMPALFLLTLRPSPLPY), 147–167 (VVVLQATVHSALYTWYFATSG), 178–198 (WMGAVALLAFVLIAATSLPAV), 205–225 (TFYYVHYVGTWVSVLAVHVHS), and 256–276 (VTVVPISTSLALLEFPLADLV). The region spanning 108-666 (LGRVAAAFMP…LAAGPQALVE (559 aa)) is the Ferric oxidoreductase domain. An FAD-binding site is contributed by 308–314 (HPFTVAS). The helical transmembrane segment at 392–412 (LMVVGGSAISFGLPFLRILNF) threads the bilayer. 431 to 439 (ILSQFRSNF) serves as a coordination point for NAD(+). 2 N-linked (GlcNAc...) asparagine glycosylation sites follow: Asn-506 and Asn-644.

The cofactor is FAD.

Its subcellular location is the membrane. It catalyses the reaction 2 a Fe(II)-siderophore + NAD(+) + H(+) = 2 a Fe(III)-siderophore + NADH. Is required for the uptake of Fe(3+) ions. May participate in the transport of electrons from cytoplasm to an extracellular substrate (Fe(3+) ion) via FAD and heme intermediates. Involved in iron homeostasis. The sequence is that of Probable ferric reductase transmembrane component (FRE8) from Eremothecium gossypii (strain ATCC 10895 / CBS 109.51 / FGSC 9923 / NRRL Y-1056) (Yeast).